The chain runs to 280 residues: Ribosomal RNA small subunit methyltransferase A (280 aa).

S-adenosyl-L-methionine-binding residues include histidine 13, leucine 15, glycine 40, glutamate 61, aspartate 85, and asparagine 106. Positions 258 to 280 are disordered; sequence RPPADVEDANAPHTEQGKGDNSQ.

It belongs to the class I-like SAM-binding methyltransferase superfamily. rRNA adenine N(6)-methyltransferase family. RsmA subfamily.

It localises to the cytoplasm. It catalyses the reaction adenosine(1518)/adenosine(1519) in 16S rRNA + 4 S-adenosyl-L-methionine = N(6)-dimethyladenosine(1518)/N(6)-dimethyladenosine(1519) in 16S rRNA + 4 S-adenosyl-L-homocysteine + 4 H(+). Functionally, specifically dimethylates two adjacent adenosines (A1518 and A1519) in the loop of a conserved hairpin near the 3'-end of 16S rRNA in the 30S particle. May play a critical role in biogenesis of 30S subunits. The chain is Ribosomal RNA small subunit methyltransferase A from Alcanivorax borkumensis (strain ATCC 700651 / DSM 11573 / NCIMB 13689 / SK2).